We begin with the raw amino-acid sequence, 325 residues long: GMP reductase (325 aa).

The Thioimidate intermediate role is filled by C174. 203 to 226 is a binding site for NADP(+); sequence IVADGGIRNNGDIAKSIRFGASMC.

This sequence belongs to the IMPDH/GMPR family. GuaC type 2 subfamily.

The enzyme catalyses IMP + NH4(+) + NADP(+) = GMP + NADPH + 2 H(+). Functionally, catalyzes the irreversible NADPH-dependent deamination of GMP to IMP. It functions in the conversion of nucleobase, nucleoside and nucleotide derivatives of G to A nucleotides, and in maintaining the intracellular balance of A and G nucleotides. This is GMP reductase from Ligilactobacillus salivarius (strain UCC118) (Lactobacillus salivarius).